We begin with the raw amino-acid sequence, 610 residues long: DNA mismatch repair protein MutL (610 aa).

It belongs to the DNA mismatch repair MutL/HexB family.

Functionally, this protein is involved in the repair of mismatches in DNA. It is required for dam-dependent methyl-directed DNA mismatch repair. May act as a 'molecular matchmaker', a protein that promotes the formation of a stable complex between two or more DNA-binding proteins in an ATP-dependent manner without itself being part of a final effector complex. This is DNA mismatch repair protein MutL from Rickettsia peacockii (strain Rustic).